A 270-amino-acid polypeptide reads, in one-letter code: Cytosolic Fe-S cluster assembly factor NUBP2 homolog (270 aa).

21–28 (GKGGVGKS) provides a ligand contact to ATP. The [4Fe-4S] cluster site is built by cysteine 195 and cysteine 198.

The protein belongs to the Mrp/NBP35 ATP-binding proteins family. NUBP2/CFD1 subfamily. As to quaternary structure, heterotetramer of 2 NUBP1 and 2 NUBP2 chains. Requires [4Fe-4S] cluster as cofactor.

It localises to the cytoplasm. Functionally, component of the cytosolic iron-sulfur (Fe/S) protein assembly (CIA) machinery. Required for maturation of extramitochondrial Fe-S proteins. The NUBP1-NUBP2 heterotetramer forms a Fe-S scaffold complex, mediating the de novo assembly of an Fe-S cluster and its transfer to target apoproteins. The sequence is that of Cytosolic Fe-S cluster assembly factor NUBP2 homolog from Nematostella vectensis (Starlet sea anemone).